A 164-amino-acid chain; its full sequence is Phosphopantetheine adenylyltransferase (164 aa).

Residue Ser9 participates in substrate binding. ATP-binding positions include 9-10 and His17; that span reads SF. Substrate contacts are provided by Lys41, Thr74, and Arg88. Residues 89–91, Glu99, and 124–130 each bind ATP; these read GVR and NSFVASS.

It belongs to the bacterial CoaD family. In terms of assembly, homohexamer. It depends on Mg(2+) as a cofactor.

The protein localises to the cytoplasm. The catalysed reaction is (R)-4'-phosphopantetheine + ATP + H(+) = 3'-dephospho-CoA + diphosphate. It functions in the pathway cofactor biosynthesis; coenzyme A biosynthesis; CoA from (R)-pantothenate: step 4/5. Its function is as follows. Reversibly transfers an adenylyl group from ATP to 4'-phosphopantetheine, yielding dephospho-CoA (dPCoA) and pyrophosphate. The protein is Phosphopantetheine adenylyltransferase of Lactobacillus helveticus (strain DPC 4571).